A 116-amino-acid chain; its full sequence is Small ribosomal subunit protein bS16 (116 aa).

Residues 88 to 116 are disordered; the sequence is RNNPKAAVPGKRMAELAKKKADRAAASAE. Residues 99-110 are compositionally biased toward basic and acidic residues; it reads RMAELAKKKADR.

Belongs to the bacterial ribosomal protein bS16 family.

This is Small ribosomal subunit protein bS16 from Cereibacter sphaeroides (strain ATCC 17029 / ATH 2.4.9) (Rhodobacter sphaeroides).